Consider the following 336-residue polypeptide: Glyceraldehyde-3-phosphate dehydrogenase (336 aa).

Residues 12–13, aspartate 34, arginine 78, and threonine 121 each bind NAD(+); that span reads RI. D-glyceraldehyde 3-phosphate-binding positions include 151–153, threonine 182, arginine 199, 212–213, and arginine 235; these read SCT and TG. Cysteine 152 serves as the catalytic Nucleophile. Asparagine 316 contacts NAD(+).

It belongs to the glyceraldehyde-3-phosphate dehydrogenase family. Homotetramer.

The protein localises to the cytoplasm. The enzyme catalyses D-glyceraldehyde 3-phosphate + phosphate + NAD(+) = (2R)-3-phospho-glyceroyl phosphate + NADH + H(+). The protein operates within carbohydrate degradation; glycolysis; pyruvate from D-glyceraldehyde 3-phosphate: step 1/5. Catalyzes the oxidative phosphorylation of glyceraldehyde 3-phosphate (G3P) to 1,3-bisphosphoglycerate (BPG) using the cofactor NAD. The first reaction step involves the formation of a hemiacetal intermediate between G3P and a cysteine residue, and this hemiacetal intermediate is then oxidized to a thioester, with concomitant reduction of NAD to NADH. The reduced NADH is then exchanged with the second NAD, and the thioester is attacked by a nucleophilic inorganic phosphate to produce BPG. The chain is Glyceraldehyde-3-phosphate dehydrogenase (gap) from Streptococcus dysgalactiae subsp. equisimilis (Streptococcus equisimilis).